Consider the following 387-residue polypeptide: 1-deoxy-D-xylulose 5-phosphate reductoisomerase (387 aa).

The NADPH site is built by Thr-10, Gly-11, Ser-12, Val-13, Asn-38, and Asn-119. Lys-120 contacts 1-deoxy-D-xylulose 5-phosphate. Glu-121 contacts NADPH. Mn(2+) is bound at residue Asp-145. Residues Ser-146, Glu-147, Ser-170, and His-193 each contribute to the 1-deoxy-D-xylulose 5-phosphate site. Position 147 (Glu-147) interacts with Mn(2+). NADPH is bound at residue Gly-199. Ser-206, Asn-211, Lys-212, and Glu-215 together coordinate 1-deoxy-D-xylulose 5-phosphate. Residue Glu-215 participates in Mn(2+) binding.

The protein belongs to the DXR family. Mg(2+) is required as a cofactor. It depends on Mn(2+) as a cofactor.

The enzyme catalyses 2-C-methyl-D-erythritol 4-phosphate + NADP(+) = 1-deoxy-D-xylulose 5-phosphate + NADPH + H(+). Its pathway is isoprenoid biosynthesis; isopentenyl diphosphate biosynthesis via DXP pathway; isopentenyl diphosphate from 1-deoxy-D-xylulose 5-phosphate: step 1/6. Functionally, catalyzes the NADPH-dependent rearrangement and reduction of 1-deoxy-D-xylulose-5-phosphate (DXP) to 2-C-methyl-D-erythritol 4-phosphate (MEP). In Wolbachia pipientis wMel, this protein is 1-deoxy-D-xylulose 5-phosphate reductoisomerase.